The sequence spans 227 residues: 2,3-bisphosphoglycerate-dependent phosphoglycerate mutase (227 aa).

Substrate is bound by residues 7–14 (RHGLSEWN), 20–21 (TG), Arg-59, 86–89 (ERHY), Lys-97, 113–114 (RR), and 182–183 (GN). His-8 serves as the catalytic Tele-phosphohistidine intermediate. Glu-86 functions as the Proton donor/acceptor in the catalytic mechanism.

It belongs to the phosphoglycerate mutase family. BPG-dependent PGAM subfamily. Homodimer.

The enzyme catalyses (2R)-2-phosphoglycerate = (2R)-3-phosphoglycerate. It functions in the pathway carbohydrate degradation; glycolysis; pyruvate from D-glyceraldehyde 3-phosphate: step 3/5. Functionally, catalyzes the interconversion of 2-phosphoglycerate and 3-phosphoglycerate. The polypeptide is 2,3-bisphosphoglycerate-dependent phosphoglycerate mutase (Mannheimia succiniciproducens (strain KCTC 0769BP / MBEL55E)).